We begin with the raw amino-acid sequence, 175 residues long: Probable DNA-directed RNA polymerase subunit delta (175 aa).

Positions 14 to 81 constitute an HTH HARE-type domain; it reads CSMIEVVHSV…GENRWGLRSW (68 aa). The segment at 91-175 is disordered; that stretch reads ILPQPKPKKK…DETEEEEEEL (85 aa). Over residues 106 to 175 the composition is skewed to acidic residues; the sequence is DGFDDYIEED…DETEEEEEEL (70 aa).

This sequence belongs to the RpoE family. As to quaternary structure, RNAP is composed of a core of 2 alpha, a beta and a beta' subunits. The core is associated with a delta subunit and one of several sigma factors.

In terms of biological role, participates in both the initiation and recycling phases of transcription. In the presence of the delta subunit, RNAP displays an increased specificity of transcription, a decreased affinity for nucleic acids, and an increased efficiency of RNA synthesis because of enhanced recycling. The protein is Probable DNA-directed RNA polymerase subunit delta of Bacillus anthracis.